A 136-amino-acid chain; its full sequence is ATP synthase epsilon chain (136 aa).

It belongs to the ATPase epsilon chain family. As to quaternary structure, F-type ATPases have 2 components, CF(1) - the catalytic core - and CF(0) - the membrane proton channel. CF(1) has five subunits: alpha(3), beta(3), gamma(1), delta(1), epsilon(1). CF(0) has three main subunits: a, b and c.

The protein resides in the cell membrane. Produces ATP from ADP in the presence of a proton gradient across the membrane. The protein is ATP synthase epsilon chain of Ureaplasma urealyticum serovar 10 (strain ATCC 33699 / Western).